The chain runs to 153 residues: Histone H2B.3 (153 aa).

Basic and acidic residues predominate over residues 1–28 (MAPKADKKPAAKKPAEEEPATEKAEKAP). The segment at 1–60 (MAPKADKKPAAKKPAEEEPATEKAEKAPAGKKPKAEKRLPAGKSAGKEGGEGKKGKKKAK) is disordered. Lys-7 and Lys-37 each carry N6-acetyllysine. A Glycyl lysine isopeptide (Lys-Gly) (interchain with G-Cter in ubiquitin) cross-link involves residue Lys-149.

The protein belongs to the histone H2B family. In terms of assembly, the nucleosome is a histone octamer containing two molecules each of H2A, H2B, H3 and H4 assembled in one H3-H4 heterotetramer and two H2A-H2B heterodimers. The octamer wraps approximately 147 bp of DNA. Post-translationally, can be acetylated to form H2BK6ac and H2BK33ac. Monoubiquitinated to form H2BK143ub1; may give a specific tag for epigenetic transcriptional activation.

The protein localises to the nucleus. It is found in the chromosome. Core component of nucleosome. Nucleosomes wrap and compact DNA into chromatin, limiting DNA accessibility to the cellular machineries which require DNA as a template. Histones thereby play a central role in transcription regulation, DNA repair, DNA replication and chromosomal stability. DNA accessibility is regulated via a complex set of post-translational modifications of histones, also called histone code, and nucleosome remodeling. The polypeptide is Histone H2B.3 (Zea mays (Maize)).